A 161-amino-acid polypeptide reads, in one-letter code: Putative ecotin-like protein (161 aa).

The first 24 residues, M1–A24, serve as a signal peptide directing secretion.

Belongs to the protease inhibitor I11 (ecotin) family.

This Methylobacillus flagellatus (strain ATCC 51484 / DSM 6875 / VKM B-1610 / KT) protein is Putative ecotin-like protein.